The following is a 201-amino-acid chain: Superoxide dismutase [Mn] (201 aa).

Positions 27, 81, 163, and 167 each coordinate Mn(2+).

This sequence belongs to the iron/manganese superoxide dismutase family. As to quaternary structure, homodimer. It depends on Mn(2+) as a cofactor.

It localises to the secreted. It carries out the reaction 2 superoxide + 2 H(+) = H2O2 + O2. Functionally, destroys superoxide anion radicals which are normally produced within the cells and which are toxic to biological systems. The polypeptide is Superoxide dismutase [Mn] (sodA) (Streptococcus pyogenes serotype M1).